The chain runs to 406 residues: Imidazolonepropionase (406 aa).

Fe(3+)-binding residues include histidine 72 and histidine 74. 2 residues coordinate Zn(2+): histidine 72 and histidine 74. The 4-imidazolone-5-propanoate site is built by arginine 81, tyrosine 144, and histidine 177. Residue tyrosine 144 participates in N-formimidoyl-L-glutamate binding. Histidine 242 lines the Fe(3+) pocket. Histidine 242 contributes to the Zn(2+) binding site. Glutamine 245 lines the 4-imidazolone-5-propanoate pocket. Aspartate 317 provides a ligand contact to Fe(3+). Residue aspartate 317 coordinates Zn(2+). N-formimidoyl-L-glutamate contacts are provided by asparagine 319 and glycine 321. A 4-imidazolone-5-propanoate-binding site is contributed by threonine 322.

The protein belongs to the metallo-dependent hydrolases superfamily. HutI family. Zn(2+) is required as a cofactor. It depends on Fe(3+) as a cofactor.

It localises to the cytoplasm. The enzyme catalyses 4-imidazolone-5-propanoate + H2O = N-formimidoyl-L-glutamate. Its pathway is amino-acid degradation; L-histidine degradation into L-glutamate; N-formimidoyl-L-glutamate from L-histidine: step 3/3. Its function is as follows. Catalyzes the hydrolytic cleavage of the carbon-nitrogen bond in imidazolone-5-propanoate to yield N-formimidoyl-L-glutamate. It is the third step in the universal histidine degradation pathway. In Yersinia pseudotuberculosis serotype O:1b (strain IP 31758), this protein is Imidazolonepropionase.